We begin with the raw amino-acid sequence, 257 residues long: Phosphonates import ATP-binding protein PhnC (257 aa).

Residues 4–248 form the ABC transporter domain; that stretch reads IKFKNVSKVY…VFSKIYGRTI (245 aa). 37–44 serves as a coordination point for ATP; the sequence is GLSGAGKS.

This sequence belongs to the ABC transporter superfamily. Phosphonates importer (TC 3.A.1.9.1) family. As to quaternary structure, the complex is composed of two ATP-binding proteins (PhnC), two transmembrane proteins (PhnE) and a solute-binding protein (PhnD).

It is found in the cell membrane. The catalysed reaction is phosphonate(out) + ATP + H2O = phosphonate(in) + ADP + phosphate + H(+). In terms of biological role, part of the ABC transporter complex PhnCDE involved in phosphonates import. Responsible for energy coupling to the transport system. This Staphylococcus aureus (strain MRSA252) protein is Phosphonates import ATP-binding protein PhnC.